Here is a 375-residue protein sequence, read N- to C-terminus: Succinyl-diaminopimelate desuccinylase (375 aa).

His66 contributes to the Zn(2+) binding site. The active site involves Asp68. Zn(2+) is bound at residue Asp99. The active-site Proton acceptor is Glu133. 3 residues coordinate Zn(2+): Glu134, Glu162, and His348.

Belongs to the peptidase M20A family. DapE subfamily. In terms of assembly, homodimer. Zn(2+) is required as a cofactor. Co(2+) serves as cofactor.

It catalyses the reaction N-succinyl-(2S,6S)-2,6-diaminopimelate + H2O = (2S,6S)-2,6-diaminopimelate + succinate. The protein operates within amino-acid biosynthesis; L-lysine biosynthesis via DAP pathway; LL-2,6-diaminopimelate from (S)-tetrahydrodipicolinate (succinylase route): step 3/3. Catalyzes the hydrolysis of N-succinyl-L,L-diaminopimelic acid (SDAP), forming succinate and LL-2,6-diaminopimelate (DAP), an intermediate involved in the bacterial biosynthesis of lysine and meso-diaminopimelic acid, an essential component of bacterial cell walls. In Shigella flexneri serotype 5b (strain 8401), this protein is Succinyl-diaminopimelate desuccinylase.